Here is a 98-residue protein sequence, read N- to C-terminus: uncharacterized protein (98 aa).

Belongs to the HHV-5 UL19 protein family.

This is an uncharacterized protein from Human cytomegalovirus (strain AD169) (HHV-5).